Reading from the N-terminus, the 239-residue chain is Serine protease SplF (239 aa).

The first 36 residues, 1-36, serve as a signal peptide directing secretion; the sequence is MNKNIIIKSIAALTILTSITGVGTTVVDGIQQTAKA. Active-site charge relay system residues include histidine 75, aspartate 114, and serine 192.

This sequence belongs to the peptidase S1B family.

Its subcellular location is the secreted. The chain is Serine protease SplF (splF) from Staphylococcus aureus (strain MSSA476).